The primary structure comprises 262 residues: Mitochondrial calcium uniporter regulator 1 (262 aa).

A coiled-coil region spans residues 138 to 175 (EKSEFSALRTQNEKVKIELQQLKKQLNDSIVKVRASNK). The chain crosses the membrane as a helical span at residues 239-261 (TIKYLAGSVFTCLTIALGFYRLW).

The protein belongs to the CCDC90 family.

It localises to the mitochondrion inner membrane. Key regulator of mitochondrial calcium uniporter (mcu) required for calcium entry into mitochondrion. The chain is Mitochondrial calcium uniporter regulator 1 from Xenopus tropicalis (Western clawed frog).